A 638-amino-acid chain; its full sequence is 1-deoxy-D-xylulose-5-phosphate synthase (638 aa).

Thiamine diphosphate is bound by residues histidine 79 and 120–122 (GHS). Aspartate 151 serves as a coordination point for Mg(2+). Thiamine diphosphate-binding positions include 152-153 (GA), asparagine 182, tyrosine 291, and glutamate 373. Asparagine 182 is a binding site for Mg(2+).

It belongs to the transketolase family. DXPS subfamily. In terms of assembly, homodimer. Mg(2+) is required as a cofactor. The cofactor is thiamine diphosphate.

The enzyme catalyses D-glyceraldehyde 3-phosphate + pyruvate + H(+) = 1-deoxy-D-xylulose 5-phosphate + CO2. It participates in metabolic intermediate biosynthesis; 1-deoxy-D-xylulose 5-phosphate biosynthesis; 1-deoxy-D-xylulose 5-phosphate from D-glyceraldehyde 3-phosphate and pyruvate: step 1/1. Catalyzes the acyloin condensation reaction between C atoms 2 and 3 of pyruvate and glyceraldehyde 3-phosphate to yield 1-deoxy-D-xylulose-5-phosphate (DXP). This is 1-deoxy-D-xylulose-5-phosphate synthase from Xanthomonas euvesicatoria pv. vesicatoria (strain 85-10) (Xanthomonas campestris pv. vesicatoria).